The following is a 250-amino-acid chain: Pyridoxine 5'-phosphate synthase (250 aa).

3-amino-2-oxopropyl phosphate is bound by residues Asn8 and Arg19. The active-site Proton acceptor is His44. The 1-deoxy-D-xylulose 5-phosphate site is built by Arg46 and His51. Glu76 serves as the catalytic Proton acceptor. Thr106 contributes to the 1-deoxy-D-xylulose 5-phosphate binding site. Residue His200 is the Proton donor of the active site. 3-amino-2-oxopropyl phosphate-binding positions include Asp201 and 223–224 (GH).

The protein belongs to the PNP synthase family. As to quaternary structure, homooctamer; tetramer of dimers.

Its subcellular location is the cytoplasm. It carries out the reaction 3-amino-2-oxopropyl phosphate + 1-deoxy-D-xylulose 5-phosphate = pyridoxine 5'-phosphate + phosphate + 2 H2O + H(+). It participates in cofactor biosynthesis; pyridoxine 5'-phosphate biosynthesis; pyridoxine 5'-phosphate from D-erythrose 4-phosphate: step 5/5. In terms of biological role, catalyzes the complicated ring closure reaction between the two acyclic compounds 1-deoxy-D-xylulose-5-phosphate (DXP) and 3-amino-2-oxopropyl phosphate (1-amino-acetone-3-phosphate or AAP) to form pyridoxine 5'-phosphate (PNP) and inorganic phosphate. The protein is Pyridoxine 5'-phosphate synthase of Rhizobium meliloti (strain 1021) (Ensifer meliloti).